A 164-amino-acid chain; its full sequence is Large ribosomal subunit protein bL17 (164 aa).

A disordered region spans residues 127–164; the sequence is RARTDSVPARKGAGKKDASRVSGTVPDGQSQKIGKKKE.

This sequence belongs to the bacterial ribosomal protein bL17 family. In terms of assembly, part of the 50S ribosomal subunit. Contacts protein L32.

This is Large ribosomal subunit protein bL17 from Treponema pallidum (strain Nichols).